The primary structure comprises 309 residues: Aspartate carbamoyltransferase catalytic subunit (309 aa).

Positions 55 and 56 each coordinate carbamoyl phosphate. Lys-85 serves as a coordination point for L-aspartate. Residues Arg-106, His-135, and Gln-138 each coordinate carbamoyl phosphate. L-aspartate contacts are provided by Arg-168 and Arg-230. Carbamoyl phosphate contacts are provided by Leu-268 and Pro-269.

Belongs to the aspartate/ornithine carbamoyltransferase superfamily. ATCase family. Heterododecamer (2C3:3R2) of six catalytic PyrB chains organized as two trimers (C3), and six regulatory PyrI chains organized as three dimers (R2).

The catalysed reaction is carbamoyl phosphate + L-aspartate = N-carbamoyl-L-aspartate + phosphate + H(+). Its pathway is pyrimidine metabolism; UMP biosynthesis via de novo pathway; (S)-dihydroorotate from bicarbonate: step 2/3. Catalyzes the condensation of carbamoyl phosphate and aspartate to form carbamoyl aspartate and inorganic phosphate, the committed step in the de novo pyrimidine nucleotide biosynthesis pathway. The sequence is that of Aspartate carbamoyltransferase catalytic subunit from Aliivibrio salmonicida (strain LFI1238) (Vibrio salmonicida (strain LFI1238)).